Reading from the N-terminus, the 149-residue chain is NADH-ubiquinone oxidoreductase chain 6 (149 aa).

A run of 4 helical transmembrane segments spans residues 23-43, 51-71, 83-103, and 114-134; these read ILML…FYFI, MMMI…MISL, LSVT…MTKL, and VNFV…LTII.

Belongs to the complex I subunit 6 family.

It localises to the mitochondrion membrane. It carries out the reaction a ubiquinone + NADH + 5 H(+)(in) = a ubiquinol + NAD(+) + 4 H(+)(out). Its function is as follows. Core subunit of the mitochondrial membrane respiratory chain NADH dehydrogenase (Complex I) that is believed to belong to the minimal assembly required for catalysis. Complex I functions in the transfer of electrons from NADH to the respiratory chain. The immediate electron acceptor for the enzyme is believed to be ubiquinone. This Rhipicephalus sanguineus (Brown dog tick) protein is NADH-ubiquinone oxidoreductase chain 6 (ND6).